Here is a 284-residue protein sequence, read N- to C-terminus: L-ribulose-5-phosphate 3-epimerase UlaE (284 aa).

It belongs to the L-ribulose-5-phosphate 3-epimerase family.

The catalysed reaction is L-ribulose 5-phosphate = L-xylulose 5-phosphate. The protein operates within cofactor degradation; L-ascorbate degradation; D-xylulose 5-phosphate from L-ascorbate: step 3/4. In terms of biological role, catalyzes the isomerization of L-xylulose-5-phosphate to L-ribulose-5-phosphate. Is involved in the anaerobic L-ascorbate utilization. This Salmonella typhi protein is L-ribulose-5-phosphate 3-epimerase UlaE.